A 486-amino-acid chain; its full sequence is Hematopoietic lineage cell-specific protein (486 aa).

The tract at residues 27-66 is involved in HAX-1 binding; the sequence is FVNDISEKEQRWGAKTIEGSGRTEHINIHQLRNKVSEEHD. At Lys-41 the chain carries N6-acetyllysine. Cortactin repeat units follow at residues 79-115, 116-152, and 153-189; these read ASHG…SQTD, AARG…SQKD, and YSHG…SQRD. Position 123 is an N6-acetyllysine (Lys-123). Tyr-140 is subject to Phosphotyrosine. The Cortactin 4; truncated repeat unit spans residues 190–212; it reads YAKGFGGQYGIQKDRVDKSAVGF. N6-acetyllysine is present on Lys-192. Phosphotyrosine is present on Tyr-198. Tyr-222 bears the Phosphotyrosine; by FGR mark. Residues 226–430 are disordered; sequence TPIEAASSGA…AGPSAGAGGA (205 aa). 2 stretches are compositionally biased toward basic and acidic residues: residues 240–258 and 265–276; these read AKFE…EEKA and QQERKAVVKMSR. Lys-241 carries the N6-acetyllysine modification. Ser-275 carries the post-translational modification Phosphoserine. Phosphothreonine is present on Thr-330. Ser-333 is modified (phosphoserine). A compositionally biased stretch (low complexity) spans 358–367; sequence VVEEPVYEAA. The span at 368 to 413 shows a compositional bias: acidic residues; sequence PELEPEPEPDYEPEPETEPDYEDVGELDRQDEDAEGDYEDVLEPED. Residues Tyr-388 and Tyr-405 each carry the phosphotyrosine; by SYK and FES modification. One can recognise an SH3 domain in the interval 429–486; that stretch reads GAGISAIALYDYQGEGSDELSFDPDDIITDIEMVDEGWWRGQCRGHFGLFPANYVKLL.

In terms of assembly, interacts (via SH2 domain) with FGR. Associates with the SH2 and SH3 domains of LCK. Binding to he LCK SH3 domain occurs constitutively, while binding to the LCK SH2 domain occurs only upon TCR stimulation. A similar binding pattern was observed with LYN, but not with FYN in which the FYN SH2 region associates upon TCR stimulation but the FYN SH3 region does not associate regardless of TCR stimulation. Directly associates with HAX1, through binding to its C-terminal region. Interacts with HS1BP3. Interacts with FES/FPS. Forms a multiprotein complex with LYN and ANKRD54. Post-translationally, phosphorylated by LYN, FYN and FGR after cross-linking of surface IgM on B-cells. Phosphorylation by LYN, FYN and FGR requires prior phosphorylation by SYK. Binds to LCK in vivo, and is tyrosine phosphorylated upon TCR stimulation. Phosphorylated by FES. Expressed only in tissues and cells of hematopoietic origin.

It localises to the mitochondrion. Functionally, substrate of the antigen receptor-coupled tyrosine kinase. Plays a role in antigen receptor signaling for both clonal expansion and deletion in lymphoid cells. May also be involved in the regulation of gene expression. In Mus musculus (Mouse), this protein is Hematopoietic lineage cell-specific protein (Hcls1).